Reading from the N-terminus, the 244-residue chain is Carboxy-S-adenosyl-L-methionine synthase (244 aa).

S-adenosyl-L-methionine is bound by residues Tyr-41, 66–68 (GCS), 91–92 (DN), 119–120 (DI), Asn-134, and Arg-201.

Belongs to the class I-like SAM-binding methyltransferase superfamily. Cx-SAM synthase family. In terms of assembly, homodimer.

The enzyme catalyses prephenate + S-adenosyl-L-methionine = carboxy-S-adenosyl-L-methionine + 3-phenylpyruvate + H2O. In terms of biological role, catalyzes the conversion of S-adenosyl-L-methionine (SAM) to carboxy-S-adenosyl-L-methionine (Cx-SAM). The sequence is that of Carboxy-S-adenosyl-L-methionine synthase from Photobacterium profundum (strain SS9).